Consider the following 458-residue polypeptide: Bifunctional protein GlmU (458 aa).

Positions 1-228 (MHPKLDILIL…DWEVLGVNSK (228 aa)) are pyrophosphorylase. UDP-N-acetyl-alpha-D-glucosamine is bound by residues 10 to 13 (LAAG), K24, Q75, 80 to 81 (GT), 102 to 104 (YGD), G139, E153, N168, and N226. Position 104 (D104) interacts with Mg(2+). Mg(2+) is bound at residue N226. The tract at residues 229–249 (AQLAELERIHQNEVAQRLLAD) is linker. The segment at 250-458 (GVTLMDPARL…KRPIKPKKEG (209 aa)) is N-acetyltransferase. UDP-N-acetyl-alpha-D-glucosamine is bound by residues R332 and K350. The Proton acceptor role is filled by H362. Y365 and N376 together coordinate UDP-N-acetyl-alpha-D-glucosamine. Acetyl-CoA contacts are provided by residues A379, 385-386 (NY), S404, A422, and R439.

In the N-terminal section; belongs to the N-acetylglucosamine-1-phosphate uridyltransferase family. This sequence in the C-terminal section; belongs to the transferase hexapeptide repeat family. As to quaternary structure, homotrimer. Mg(2+) serves as cofactor.

The protein localises to the cytoplasm. The enzyme catalyses alpha-D-glucosamine 1-phosphate + acetyl-CoA = N-acetyl-alpha-D-glucosamine 1-phosphate + CoA + H(+). It carries out the reaction N-acetyl-alpha-D-glucosamine 1-phosphate + UTP + H(+) = UDP-N-acetyl-alpha-D-glucosamine + diphosphate. Its pathway is nucleotide-sugar biosynthesis; UDP-N-acetyl-alpha-D-glucosamine biosynthesis; N-acetyl-alpha-D-glucosamine 1-phosphate from alpha-D-glucosamine 6-phosphate (route II): step 2/2. It participates in nucleotide-sugar biosynthesis; UDP-N-acetyl-alpha-D-glucosamine biosynthesis; UDP-N-acetyl-alpha-D-glucosamine from N-acetyl-alpha-D-glucosamine 1-phosphate: step 1/1. The protein operates within bacterial outer membrane biogenesis; LPS lipid A biosynthesis. Catalyzes the last two sequential reactions in the de novo biosynthetic pathway for UDP-N-acetylglucosamine (UDP-GlcNAc). The C-terminal domain catalyzes the transfer of acetyl group from acetyl coenzyme A to glucosamine-1-phosphate (GlcN-1-P) to produce N-acetylglucosamine-1-phosphate (GlcNAc-1-P), which is converted into UDP-GlcNAc by the transfer of uridine 5-monophosphate (from uridine 5-triphosphate), a reaction catalyzed by the N-terminal domain. The polypeptide is Bifunctional protein GlmU (Thiobacillus denitrificans (strain ATCC 25259 / T1)).